The following is a 245-amino-acid chain: Adenosylcobinamide-GDP ribazoletransferase (245 aa).

6 helical membrane-spanning segments follow: residues 35 to 55, 108 to 128, 137 to 157, 176 to 196, 197 to 217, and 222 to 242; these read WFPL…ALGL, IGAF…IGAH, GVLI…AALV, IAIG…TPVM, TTVT…HLAR, and INGD…LLAA.

This sequence belongs to the CobS family. The cofactor is Mg(2+).

Its subcellular location is the cell inner membrane. The catalysed reaction is alpha-ribazole + adenosylcob(III)inamide-GDP = adenosylcob(III)alamin + GMP + H(+). The enzyme catalyses alpha-ribazole 5'-phosphate + adenosylcob(III)inamide-GDP = adenosylcob(III)alamin 5'-phosphate + GMP + H(+). The protein operates within cofactor biosynthesis; adenosylcobalamin biosynthesis; adenosylcobalamin from cob(II)yrinate a,c-diamide: step 7/7. In terms of biological role, joins adenosylcobinamide-GDP and alpha-ribazole to generate adenosylcobalamin (Ado-cobalamin). Also synthesizes adenosylcobalamin 5'-phosphate from adenosylcobinamide-GDP and alpha-ribazole 5'-phosphate. The protein is Adenosylcobinamide-GDP ribazoletransferase of Nitratidesulfovibrio vulgaris (strain DP4) (Desulfovibrio vulgaris).